Here is a 351-residue protein sequence, read N- to C-terminus: Cytochrome c biogenesis protein CcsA (351 aa).

The next 8 membrane-spanning stretches (helical) occupy residues 12–32 (NISF…AAFP), 37–57 (LSIL…TLLG), 68–88 (ISNL…IHLI), 97–117 (LVGV…ALTL), 143–163 (MMLS…FLII), 259–279 (IIGL…VWAN), 294–314 (WALI…TKGW), and 320–340 (AILA…VNLL).

It belongs to the CcmF/CycK/Ccl1/NrfE/CcsA family. May interact with ccs1.

The protein localises to the cellular thylakoid membrane. In terms of biological role, required during biogenesis of c-type cytochromes (cytochrome c6 and cytochrome f) at the step of heme attachment. This chain is Cytochrome c biogenesis protein CcsA, found in Trichodesmium erythraeum (strain IMS101).